A 425-amino-acid polypeptide reads, in one-letter code: tRNA(Met) cytidine acetate ligase (425 aa).

ATP contacts are provided by residues 7–20 (IVEY…HLYH), Gly102, Asn165, and 190–191 (RI).

It belongs to the TmcAL family.

Its subcellular location is the cytoplasm. The catalysed reaction is cytidine(34) in elongator tRNA(Met) + acetate + ATP = N(4)-acetylcytidine(34) in elongator tRNA(Met) + AMP + diphosphate. Its function is as follows. Catalyzes the formation of N(4)-acetylcytidine (ac(4)C) at the wobble position of elongator tRNA(Met), using acetate and ATP as substrates. First activates an acetate ion to form acetyladenylate (Ac-AMP) and then transfers the acetyl group to tRNA to form ac(4)C34. The polypeptide is tRNA(Met) cytidine acetate ligase (Thermosipho melanesiensis (strain DSM 12029 / CIP 104789 / BI429)).